The sequence spans 81 residues: Centromere protein X (81 aa).

Met1 is subject to N-acetylmethionine.

It belongs to the CENP-X/MHF2 family. As to quaternary structure, heterodimer with CENPX, sometimes called MHF; this interaction stabilizes both partners. MHF heterodimers can assemble to form tetrameric structures. MHF also coassemble with CENPT-CENPW heterodimers at centromeres to form the tetrameric CENP-T-W-S-X complex. Forms a discrete complex with FANCM and CENPX, called FANCM-MHF; this interaction, probably mediated by direct binding between CENPS and FANCM, leads to synergistic activation of double-stranded DNA binding and strongly stimulates FANCM-mediated DNA remodeling. Recruited by FANCM to the Fanconi anemia (FA) core complex, which consists of CENPS, CENPX, FANCA, FANCB, FANCC, FANCE, FANCF, FANCG, FANCL, FANCM, FAAP24 and FAAP100. The FA core complex associates with Bloom syndrome (BLM) complex, which consists of at least BLM, DNA topoisomerase 3-alpha (TOP3A), RMI1/BLAP75, RPA1/RPA70 and RPA2/RPA32. The super complex between FA and BLM is called BRAFT.

Its subcellular location is the nucleus. The protein localises to the chromosome. It localises to the centromere. The protein resides in the kinetochore. Functionally, DNA-binding component of the Fanconi anemia (FA) core complex. Required for the normal activation of the FA pathway, leading to monoubiquitination of the FANCI-FANCD2 complex in response to DNA damage, cellular resistance to DNA cross-linking drugs, and prevention of chromosomal breakage. In complex with CENPS (MHF heterodimer), crucial cofactor for FANCM in both binding and ATP-dependent remodeling of DNA. Stabilizes FANCM. In complex with CENPS and FANCM (but not other FANC proteins), rapidly recruited to blocked forks and promotes gene conversion at blocked replication forks. In complex with CENPS, CENPT and CENPW (CENP-T-W-S-X heterotetramer), involved in the formation of a functional kinetochore outer plate, which is essential for kinetochore-microtubule attachment and faithful mitotic progression. As a component of MHF and CENP-T-W-S-X complexes, binds DNA and bends it to form a nucleosome-like structure. DNA-binding function is fulfilled in the presence of CENPS, with the following preference for DNA substates: Holliday junction &gt; double-stranded &gt; splay arm &gt; single-stranded. Does not bind DNA on its own. The sequence is that of Centromere protein X (CENPX) from Homo sapiens (Human).